An 82-amino-acid polypeptide reads, in one-letter code: Precursor of CEP3 (82 aa).

The N-terminal stretch at 1-24 (MATINVYVFAFIFLLTISVGSIEG) is a signal peptide. The propeptide occupies 25–63 (RKLTKFTVTTSEEIRAGGSVLSSSPPTEPLESPPSHGVD). The disordered stretch occupies residues 40-82 (AGGSVLSSSPPTEPLESPPSHGVDTFRPTEPGHSPGIGHSVHN). Residues proline 67, proline 70, and proline 74 each carry the hydroxyproline modification. Positions 79 to 82 (SVHN) are excised as a propeptide.

It belongs to the C-terminally encoded plant signaling peptide (CEP) family. Interacts with the CEP receptor CEPR1. Post-translationally, the mature small signaling peptide is generated by proteolytic processing of the longer precursor. As to expression, mostly expressed in roots. Present in lateral roots (especially in vasculature), root-hypocotyl junction and cotyledons.

The protein resides in the secreted. It localises to the extracellular space. It is found in the apoplast. In terms of biological role, extracellular signaling peptide that represses primary root growth rate and significantly inhibits lateral root formation. Promotes shoot growth. Modulates leaf morphology. Regulates systemic nitrogen (N)-demand signaling. Mediates systemic up-regulation of genes involved in N uptake and assimilation pathways. The chain is Precursor of CEP3 from Arabidopsis thaliana (Mouse-ear cress).